The primary structure comprises 258 residues: Kallikrein-1 (258 aa).

A signal peptide spans Met1–Ala18. A propeptide spans Pro19–Arg24 (activation peptide). The Peptidase S1 domain maps to Ile25 to Ala255. 5 disulfides stabilise this stretch: Cys31–Cys170, Cys47–Cys63, Cys149–Cys216, Cys181–Cys195, and Cys206–Cys231. The Charge relay system role is filled by His62. Ser90 is a glycosylation site (O-linked (GalNAc...) serine). Asn99 carries an N-linked (GlcNAc...) asparagine glycan. An O-linked (GalNAc...) serine glycan is attached at Ser101. N-linked (GlcNAc...) asparagine glycosylation occurs at Asn105. Asp117 serves as the catalytic Charge relay system. N-linked (GlcNAc...) asparagine glycosylation is present at Asn161. An O-linked (GalNAc...) serine glycan is attached at Ser163. The active-site Charge relay system is the Ser210.

It belongs to the peptidase S1 family. Kallikrein subfamily.

It catalyses the reaction Preferential cleavage of Arg-|-Xaa bonds in small molecule substrates. Highly selective action to release kallidin (lysyl-bradykinin) from kininogen involves hydrolysis of Met-|-Xaa or Leu-|-Xaa.. Functionally, glandular kallikreins cleave Met-Lys and Arg-Ser bonds in kininogen to release Lys-bradykinin. This chain is Kallikrein-1 (KLK1), found in Papio hamadryas (Hamadryas baboon).